Consider the following 81-residue polypeptide: ATP synthase subunit c, chloroplastic (81 aa).

2 helical membrane passes run P3 to G23 and L57 to A77.

It belongs to the ATPase C chain family. F-type ATPases have 2 components, F(1) - the catalytic core - and F(0) - the membrane proton channel. F(1) has five subunits: alpha(3), beta(3), gamma(1), delta(1), epsilon(1). F(0) has four main subunits: a(1), b(1), b'(1) and c(10-14). The alpha and beta chains form an alternating ring which encloses part of the gamma chain. F(1) is attached to F(0) by a central stalk formed by the gamma and epsilon chains, while a peripheral stalk is formed by the delta, b and b' chains.

It is found in the plastid. Its subcellular location is the chloroplast thylakoid membrane. Functionally, f(1)F(0) ATP synthase produces ATP from ADP in the presence of a proton or sodium gradient. F-type ATPases consist of two structural domains, F(1) containing the extramembraneous catalytic core and F(0) containing the membrane proton channel, linked together by a central stalk and a peripheral stalk. During catalysis, ATP synthesis in the catalytic domain of F(1) is coupled via a rotary mechanism of the central stalk subunits to proton translocation. Its function is as follows. Key component of the F(0) channel; it plays a direct role in translocation across the membrane. A homomeric c-ring of between 10-14 subunits forms the central stalk rotor element with the F(1) delta and epsilon subunits. The sequence is that of ATP synthase subunit c, chloroplastic from Euglena gracilis.